The chain runs to 330 residues: Flotillin-like protein FloA (330 aa).

2 consecutive transmembrane segments (helical) span residues 5 to 25 (IILPIIIIAAVLIALAILFTF) and 28 to 48 (VALWISALAAGVKISIFTLIG).

The protein belongs to the flotillin-like FloA family. In terms of assembly, homooligomerizes.

It is found in the cell membrane. It localises to the membrane raft. Its function is as follows. Found in functional membrane microdomains (FMM) that may be equivalent to eukaryotic membrane rafts. FMMs are highly dynamic and increase in number as cells age. Flotillins are thought to be important factors in membrane fluidity. This Oceanobacillus iheyensis (strain DSM 14371 / CIP 107618 / JCM 11309 / KCTC 3954 / HTE831) protein is Flotillin-like protein FloA.